Reading from the N-terminus, the 351-residue chain is UDP-3-O-acylglucosamine N-acyltransferase (351 aa).

The active-site Proton acceptor is the histidine 239.

This sequence belongs to the transferase hexapeptide repeat family. LpxD subfamily. In terms of assembly, homotrimer.

It catalyses the reaction a UDP-3-O-[(3R)-3-hydroxyacyl]-alpha-D-glucosamine + a (3R)-hydroxyacyl-[ACP] = a UDP-2-N,3-O-bis[(3R)-3-hydroxyacyl]-alpha-D-glucosamine + holo-[ACP] + H(+). It participates in bacterial outer membrane biogenesis; LPS lipid A biosynthesis. Catalyzes the N-acylation of UDP-3-O-acylglucosamine using 3-hydroxyacyl-ACP as the acyl donor. Is involved in the biosynthesis of lipid A, a phosphorylated glycolipid that anchors the lipopolysaccharide to the outer membrane of the cell. This is UDP-3-O-acylglucosamine N-acyltransferase from Vibrio cholerae serotype O1 (strain ATCC 39315 / El Tor Inaba N16961).